The following is a 329-amino-acid chain: MAALKMTISCFLFLQVIYCLLSSFAPTNVQGLKVGFYDKACPKAELIVKKSVFEAVKNDRTIAAPLLRMFFHDCFVRGCEGSVLLELKNKKDEKNSIPNLTLRGFEIIDNVKAALEKECPGIVSCSDVLALVARDAMVALNGPSWEVETGRRDGLVTNITEALLNLPSPFNNISSLITQFQSKGLDKKDLVVLSGGHTIGNGHCPQITNRLYNFTGKGDSDPNLDTEYAVKLRGKCKPTDTTTALEMDPGSFKTFDESYFKLVSQRRGLFQSDAALLDNQETKSYVLKSLNSDGSTFFKDFGVSMVKMGRIGVLTGQVGEVRKKCRMVN.

Positions 1–31 (MAALKMTISCFLFLQVIYCLLSSFAPTNVQG) are cleaved as a signal peptide. 4 disulfides stabilise this stretch: Cys-41/Cys-119, Cys-74/Cys-79, Cys-125/Cys-325, and Cys-204/Cys-236. His-72 functions as the Proton acceptor in the catalytic mechanism. Residues Asp-73, Val-76, Gly-78, Glu-80, and Ser-82 each coordinate Ca(2+). Asn-158 carries an N-linked (GlcNAc...) asparagine glycan. Position 167 (Pro-167) interacts with substrate. The N-linked (GlcNAc...) asparagine glycan is linked to Asn-172. Heme b is bound at residue His-197. Thr-198 contributes to the Ca(2+) binding site. N-linked (GlcNAc...) asparagine glycosylation is present at Asn-213. Residues Asp-248, Ser-251, and Asp-256 each contribute to the Ca(2+) site.

It belongs to the peroxidase family. Classical plant (class III) peroxidase subfamily. Heme b serves as cofactor. Requires Ca(2+) as cofactor.

The protein localises to the secreted. The enzyme catalyses 2 a phenolic donor + H2O2 = 2 a phenolic radical donor + 2 H2O. In terms of biological role, removal of H(2)O(2), oxidation of toxic reductants, biosynthesis and degradation of lignin, suberization, auxin catabolism, response to environmental stresses such as wounding, pathogen attack and oxidative stress. These functions might be dependent on each isozyme/isoform in each plant tissue. The polypeptide is Peroxidase 56 (PER56) (Arabidopsis thaliana (Mouse-ear cress)).